A 451-amino-acid polypeptide reads, in one-letter code: Opioid growth factor receptor-like protein 1 (451 aa).

Disordered stretches follow at residues 1–89 (MGNL…TAKP) and 308–451 (ENFI…VLVQ). Over residues 43–66 (PGQESEQPAQPPEQAGGRPGASPA) the composition is skewed to low complexity. The segment covering 322-341 (GSKAQKMSSPLASSHNSQTS) has biased composition (polar residues). Composition is skewed to basic and acidic residues over residues 362–381 (TAED…DRPS) and 389–399 (AKPRNTEKDSN). Positions 431–443 (NDNQDNENPGNTN) are enriched in low complexity.

It belongs to the opioid growth factor receptor family. Ubiquitous.

In Homo sapiens (Human), this protein is Opioid growth factor receptor-like protein 1 (OGFRL1).